Here is a 226-residue protein sequence, read N- to C-terminus: Glutathione peroxidase 3 (226 aa).

Positions 1 to 24 (MARLFRASCLLSLLLAGFIPPSQG) are cleaved as a signal peptide. U73 is an active-site residue. U73 is a non-standard amino acid (selenocysteine).

It belongs to the glutathione peroxidase family. In terms of assembly, homotetramer. As to expression, secreted in plasma.

The protein localises to the secreted. It carries out the reaction 2 glutathione + H2O2 = glutathione disulfide + 2 H2O. The enzyme catalyses tert-butyl hydroperoxide + 2 glutathione = tert-butanol + glutathione disulfide + H2O. In terms of biological role, protects cells and enzymes from oxidative damage, by catalyzing the reduction of hydrogen peroxide, lipid peroxides and organic hydroperoxide, by glutathione. The protein is Glutathione peroxidase 3 of Bos taurus (Bovine).